The chain runs to 647 residues: Phosphomethylpyrimidine synthase (647 aa).

Residues N235, M264, Y293, H329, 349-351, 390-393, and E429 contribute to the substrate site; these read SRG and DGLR. A Zn(2+)-binding site is contributed by H433. Position 456 (Y456) interacts with substrate. H497 lines the Zn(2+) pocket. [4Fe-4S] cluster is bound by residues C577, C580, and C585. Positions 623–647 are disordered; the sequence is KSAEFKASGSELYHPAVSHEEVAEG.

It belongs to the ThiC family. As to quaternary structure, homodimer. The cofactor is [4Fe-4S] cluster.

The enzyme catalyses 5-amino-1-(5-phospho-beta-D-ribosyl)imidazole + S-adenosyl-L-methionine = 4-amino-2-methyl-5-(phosphooxymethyl)pyrimidine + CO + 5'-deoxyadenosine + formate + L-methionine + 3 H(+). It participates in cofactor biosynthesis; thiamine diphosphate biosynthesis. Catalyzes the synthesis of the hydroxymethylpyrimidine phosphate (HMP-P) moiety of thiamine from aminoimidazole ribotide (AIR) in a radical S-adenosyl-L-methionine (SAM)-dependent reaction. The chain is Phosphomethylpyrimidine synthase from Vibrio vulnificus (strain CMCP6).